The primary structure comprises 757 residues: Probable phospholipase C20G8.02, mitochondrial (757 aa).

A mitochondrion-targeting transit peptide spans 1–13; sequence MILYIVLPFYVRT. Positions 289-330 are disordered; that stretch reads ESNSKPSTPVPTEELTSTTLLNDSSDPSDNFTPSNTESTIDL. Residues 302–329 show a composition bias toward polar residues; sequence ELTSTTLLNDSSDPSDNFTPSNTESTID. S524 is an active-site residue. Residues 547–757 form the DDHD domain; sequence LDFPVANFFA…LAHFILTQLL (211 aa).

Belongs to the PA-PLA1 family.

It localises to the mitochondrion. Its function is as follows. Probable phospholipase that hydrolyzes phosphatidic acid. This chain is Probable phospholipase C20G8.02, mitochondrial, found in Schizosaccharomyces pombe (strain 972 / ATCC 24843) (Fission yeast).